The chain runs to 351 residues: Foldase protein PrsA 1 (351 aa).

An N-terminal signal peptide occupies residues 1-22 (MKNSNKLIASVVTLASVMALAA). Cys-23 carries N-palmitoyl cysteine lipidation. Cys-23 carries the S-diacylglycerol cysteine lipid modification. Residues 145-240 (TPTMAVEMIT…KKFYIVKVTK (96 aa)) form the PpiC domain. Low complexity-rich tracts occupy residues 303–317 (KTKA…SESS) and 326–351 (ESEQ…PAAQ). A disordered region spans residues 303–351 (KTKAASESSTTSESSKAAEENPSESEQTQTSSAEEPTETEAQTQEPAAQ).

The protein belongs to the PrsA family.

The protein resides in the cell membrane. The catalysed reaction is [protein]-peptidylproline (omega=180) = [protein]-peptidylproline (omega=0). Its function is as follows. Plays a major role in protein secretion by helping the post-translocational extracellular folding of several secreted proteins. The protein is Foldase protein PrsA 1 (prsA1) of Streptococcus pyogenes serotype M1.